The primary structure comprises 105 residues: Large ribosomal subunit protein bL21c (105 aa).

This sequence belongs to the bacterial ribosomal protein bL21 family. As to quaternary structure, part of the 50S ribosomal subunit.

The protein resides in the plastid. It is found in the chloroplast. Functionally, this protein binds to 23S rRNA. This is Large ribosomal subunit protein bL21c from Thalassiosira pseudonana (Marine diatom).